Reading from the N-terminus, the 472-residue chain is UDP-N-acetylmuramate--L-alanine ligase (472 aa).

122–128 is a binding site for ATP; that stretch reads GSHGKTT.

It belongs to the MurCDEF family.

The protein localises to the cytoplasm. The catalysed reaction is UDP-N-acetyl-alpha-D-muramate + L-alanine + ATP = UDP-N-acetyl-alpha-D-muramoyl-L-alanine + ADP + phosphate + H(+). Its pathway is cell wall biogenesis; peptidoglycan biosynthesis. Its function is as follows. Cell wall formation. The sequence is that of UDP-N-acetylmuramate--L-alanine ligase from Prochlorococcus marinus (strain SARG / CCMP1375 / SS120).